The chain runs to 417 residues: E3 ubiquitin-protein ligase RNF135 (417 aa).

Residues 21–67 form an RING-type zinc finger; the sequence is CIICQGLLDQPTTLPCGHSFCLRCLHDLWVSKRGAVDGCPWACPICR. 2 disordered regions span residues 95–118 and 143–173; these read EVEAGSEPEPAPAPRSAPQVTVQK and TQRPNLGSGQDNAQGTPPTDSSSEGEHSLDS. Coiled-coil stretches lie at residues 121–145 and 180–204; these read TNVIQELTDMVRQLVDDVKSLQTQR and SISQKKIQEILHNLEEIQEKLQGSV. The span at 143 to 164 shows a compositional bias: polar residues; the sequence is TQRPNLGSGQDNAQGTPPTDSS. Residues 225–417 enclose the B30.2/SPRY domain; that stretch reads PDQRRPAPRK…NYLEIKQLNT (193 aa).

As to quaternary structure, homodimer. Interacts (homodimer) with RIGI (double-stranded RNA-bound oligomeric form); involved in both RIGI ubiquitination, oligomerization into filaments associated with viral RNAs and the bridging of these filaments. Interacts with UBE2D3 and UBE2N; E2 ubiquitin ligases involved in RNF135-mediated ubiquitination of RIGI and activation of the RIG-I signaling pathway. Interacts with PCBP2. Ubiquitously expressed.

It localises to the cytoplasm. It is found in the stress granule. The catalysed reaction is S-ubiquitinyl-[E2 ubiquitin-conjugating enzyme]-L-cysteine + [acceptor protein]-L-lysine = [E2 ubiquitin-conjugating enzyme]-L-cysteine + N(6)-ubiquitinyl-[acceptor protein]-L-lysine.. Its pathway is protein modification; protein ubiquitination. In terms of biological role, E2-dependent E3 ubiquitin-protein ligase that functions as a RIGI coreceptor in the sensing of viral RNAs in cell cytoplasm and the activation of the antiviral innate immune response. Together with the UBE2D3, UBE2N and UB2V1 E2 ligases, catalyzes the 'Lys-63'-linked polyubiquitination of RIGI oligomerized on viral RNAs, an essential step in the activation of the RIG-I signaling pathway. Through a ubiquitin-independent parallel mechanism, which consists in bridging RIGI filaments forming on longer viral RNAs, further activates the RIG-I signaling pathway. This second mechanism that synergizes with the ubiquitin-dependent one would thereby allow an RNA length-dependent regulation of the RIG-I signaling pathway. Associated with the E2 ligase UBE2N, also constitutively synthesizes unanchored 'Lys-63'-linked polyubiquitin chains that may also activate the RIG-I signaling pathway. It is not involved in the innate immune response against DNA viruses. The polypeptide is E3 ubiquitin-protein ligase RNF135 (Mus musculus (Mouse)).